A 227-amino-acid chain; its full sequence is Ribose-5-phosphate isomerase A (227 aa).

Substrate is bound by residues 26–29, 82–85, and 95–98; these read TGST, DGAD, and KGGG. Glu104 (proton acceptor) is an active-site residue. A substrate-binding site is contributed by Lys122.

The protein belongs to the ribose 5-phosphate isomerase family. In terms of assembly, homodimer.

It carries out the reaction aldehydo-D-ribose 5-phosphate = D-ribulose 5-phosphate. It functions in the pathway carbohydrate degradation; pentose phosphate pathway; D-ribose 5-phosphate from D-ribulose 5-phosphate (non-oxidative stage): step 1/1. Catalyzes the reversible conversion of ribose-5-phosphate to ribulose 5-phosphate. This chain is Ribose-5-phosphate isomerase A, found in Streptococcus pyogenes serotype M28 (strain MGAS6180).